Here is a 234-residue protein sequence, read N- to C-terminus: Uracil-DNA glycosylase (234 aa).

Aspartate 68 (proton acceptor) is an active-site residue.

It belongs to the uracil-DNA glycosylase (UDG) superfamily. UNG family.

The protein resides in the cytoplasm. The catalysed reaction is Hydrolyzes single-stranded DNA or mismatched double-stranded DNA and polynucleotides, releasing free uracil.. Excises uracil residues from the DNA which can arise as a result of misincorporation of dUMP residues by DNA polymerase or due to deamination of cytosine. In Ruegeria sp. (strain TM1040) (Silicibacter sp.), this protein is Uracil-DNA glycosylase.